The primary structure comprises 368 residues: Phosphate acyltransferase (368 aa).

Belongs to the PlsX family. In terms of assembly, homodimer. Probably interacts with PlsY.

The protein resides in the cytoplasm. It carries out the reaction a fatty acyl-[ACP] + phosphate = an acyl phosphate + holo-[ACP]. It functions in the pathway lipid metabolism; phospholipid metabolism. Functionally, catalyzes the reversible formation of acyl-phosphate (acyl-PO(4)) from acyl-[acyl-carrier-protein] (acyl-ACP). This enzyme utilizes acyl-ACP as fatty acyl donor, but not acyl-CoA. This chain is Phosphate acyltransferase, found in Granulibacter bethesdensis (strain ATCC BAA-1260 / CGDNIH1).